We begin with the raw amino-acid sequence, 295 residues long: Sulfotransferase 1 family member D1 (295 aa).

Residue 48 to 53 (KSGTTW) coordinates 3'-phosphoadenylyl sulfate. Residues Phe-81 and 106-108 (KTH) contribute to the substrate site. The Proton acceptor role is filled by His-108. Arg-130 and Ser-138 together coordinate 3'-phosphoadenylyl sulfate. Phe-142 lines the substrate pocket. 3'-phosphoadenylyl sulfate-binding positions include Tyr-193, Ser-227, and 257–259 (RKG).

Belongs to the sulfotransferase 1 family.

The protein localises to the cytoplasm. Functionally, sulfotransferase with broad substrate specificity that utilizes 3'-phospho-5'-adenylyl sulfate (PAPS) as sulfonate donor to catalyze the sulfate conjugation of catecholamines, such as dopamine, prostaglandins, leukotriene E4, drugs and xenobiotic compounds. Has sulfotransferase activity towards p-nitrophenol, 2-naphthylamine and minoxidil (in vitro). Sulfonation increases the water solubility of most compounds, and therefore their renal excretion, but it can also result in bioactivation to form active metabolites. This Rattus norvegicus (Rat) protein is Sulfotransferase 1 family member D1 (Sult1d1).